A 249-amino-acid polypeptide reads, in one-letter code: MAAQATGGRATQRSQQSPAKPKGLTVRQKKILETIQRSVNDNGYPPSMREIGDTVGLASLSSVTHQLSQLEKLGYLRRDPKRPRAMEVLMPLTLDEGTAKISGVEKPARLRTIGGLAVSELATATDTAMVPLVGRIAAGGPILADQVVEDVMPLPRQLVGHGELFMLKVTGDSMIDAAICDGDWVVVRRQSDAVNGDIVAALLDDEATVKTFRQRDGHTWLLPQNTQYEPILGDHANIMGKVVSVFRSL.

The interval 1-26 (MAAQATGGRATQRSQQSPAKPKGLTV) is disordered. The span at 9 to 18 (RATQRSQQSP) shows a compositional bias: polar residues. Positions 48 to 68 (MREIGDTVGLASLSSVTHQLS) form a DNA-binding region, H-T-H motif. Catalysis depends on for autocatalytic cleavage activity residues serine 173 and lysine 210.

This sequence belongs to the peptidase S24 family. In terms of assembly, homodimer.

It catalyses the reaction Hydrolysis of Ala-|-Gly bond in repressor LexA.. Functionally, represses a number of genes involved in the response to DNA damage (SOS response), including recA and lexA. In the presence of single-stranded DNA, RecA interacts with LexA causing an autocatalytic cleavage which disrupts the DNA-binding part of LexA, leading to derepression of the SOS regulon and eventually DNA repair. The sequence is that of LexA repressor from Arthrobacter sp. (strain FB24).